The chain runs to 419 residues: Putative zinc metalloprotease spr0242 (419 aa).

Position 18 (histidine 18) interacts with Zn(2+). Glutamate 19 is an active-site residue. Histidine 22 lines the Zn(2+) pocket. 3 helical membrane-spanning segments follow: residues 169 to 191 (LITN…WVLI), 345 to 367 (ILYF…IPAL), and 388 to 410 (EIET…AVTW).

It belongs to the peptidase M50B family. It depends on Zn(2+) as a cofactor.

It is found in the cell membrane. In Streptococcus pneumoniae (strain ATCC BAA-255 / R6), this protein is Putative zinc metalloprotease spr0242.